Here is a 188-residue protein sequence, read N- to C-terminus: NADH-quinone oxidoreductase subunit B 1 (188 aa).

[4Fe-4S] cluster contacts are provided by C39, C40, C105, and C134.

It belongs to the complex I 20 kDa subunit family. In terms of assembly, NDH-1 is composed of 14 different subunits. Subunits NuoB, C, D, E, F, and G constitute the peripheral sector of the complex. The cofactor is [4Fe-4S] cluster.

The protein resides in the cell inner membrane. The enzyme catalyses a quinone + NADH + 5 H(+)(in) = a quinol + NAD(+) + 4 H(+)(out). Its function is as follows. NDH-1 shuttles electrons from NADH, via FMN and iron-sulfur (Fe-S) centers, to quinones in the respiratory chain. The immediate electron acceptor for the enzyme in this species is believed to be ubiquinone. Couples the redox reaction to proton translocation (for every two electrons transferred, four hydrogen ions are translocated across the cytoplasmic membrane), and thus conserves the redox energy in a proton gradient. This is NADH-quinone oxidoreductase subunit B 1 from Solibacter usitatus (strain Ellin6076).